Consider the following 211-residue polypeptide: Large ribosomal subunit protein uL3 (211 aa).

The interval threonine 135–glycine 155 is disordered. Glutamine 152 bears the N5-methylglutamine mark.

This sequence belongs to the universal ribosomal protein uL3 family. In terms of assembly, part of the 50S ribosomal subunit. Forms a cluster with proteins L14 and L19. In terms of processing, methylated by PrmB.

Functionally, one of the primary rRNA binding proteins, it binds directly near the 3'-end of the 23S rRNA, where it nucleates assembly of the 50S subunit. The polypeptide is Large ribosomal subunit protein uL3 (Pseudoalteromonas translucida (strain TAC 125)).